Consider the following 935-residue polypeptide: Phosphoenolpyruvate carboxylase (935 aa).

Active-site residues include His-161 and Lys-593.

This sequence belongs to the PEPCase type 1 family. Requires Mg(2+) as cofactor.

The enzyme catalyses oxaloacetate + phosphate = phosphoenolpyruvate + hydrogencarbonate. Functionally, forms oxaloacetate, a four-carbon dicarboxylic acid source for the tricarboxylic acid cycle. In Mycolicibacterium paratuberculosis (strain ATCC BAA-968 / K-10) (Mycobacterium paratuberculosis), this protein is Phosphoenolpyruvate carboxylase.